A 256-amino-acid chain; its full sequence is Protein Ta0487 (256 aa).

This sequence belongs to the CinA family.

The protein is Protein Ta0487 of Thermoplasma acidophilum (strain ATCC 25905 / DSM 1728 / JCM 9062 / NBRC 15155 / AMRC-C165).